Consider the following 303-residue polypeptide: Taste receptor type 2 member 2 (303 aa).

Residues 1 to 10 lie on the Extracellular side of the membrane; the sequence is MALSFSAILH. Residues 11 to 31 traverse the membrane as a helical segment; it reads IIMMSAEFFTGITVNGFLIIV. At 32 to 56 the chain is on the cytoplasmic side; the sequence is NCNELIKHRKLMPIQILLMCIGMSR. Residues 57-77 form a helical membrane-spanning segment; sequence FGLQMVLMVQSFFSVFFPLLY. Residues 78–79 lie on the Extracellular side of the membrane; that stretch reads VK. The chain crosses the membrane as a helical span at residues 80–100; the sequence is IIYGAAMMFLWMFFSSISLWF. Topologically, residues 101 to 102 are cytoplasmic; sequence AT. A helical transmembrane segment spans residues 103–123; the sequence is CLSVFYCLKISGFTQSCFLWL. Topologically, residues 124 to 129 are extracellular; sequence KFRIPK. A helical transmembrane segment spans residues 130–150; that stretch reads LIPWLLLGSVLASVSIASVCI. The Cytoplasmic segment spans residues 151 to 185; that stretch reads EVDYAKNVEEDALRNTTLKKSKTKIKKISEVLLVN. A helical transmembrane segment spans residues 186–206; that stretch reads LALIFPLAIFVMCTSMLLISL. The Extracellular portion of the chain corresponds to 207 to 234; that stretch reads YKHTHRMQHGSHGFRNANTEAHINALKT. The chain crosses the membrane as a helical span at residues 235–255; it reads VITFFCFFISYFAAFMTNMTF. Topologically, residues 256–277 are cytoplasmic; sequence SLPYRSHQFFMLKDIMAAYPSG.

It belongs to the G-protein coupled receptor T2R family.

It localises to the cell membrane. In terms of biological role, bitter taste receptor that detects natural and synthetic bitter compounds. In Homo sapiens (Human), this protein is Taste receptor type 2 member 2.